The following is a 118-amino-acid chain: NADH-ubiquinone oxidoreductase chain 3 (118 aa).

3 consecutive transmembrane segments (helical) span residues 5–25, 62–82, and 87–107; these read YIYI…LIFL, LIAI…PWSI, and GSFF…VGFI.

Belongs to the complex I subunit 3 family.

The protein resides in the mitochondrion membrane. It carries out the reaction a ubiquinone + NADH + 5 H(+)(in) = a ubiquinol + NAD(+) + 4 H(+)(out). Its function is as follows. Core subunit of the mitochondrial membrane respiratory chain NADH dehydrogenase (Complex I) that is believed to belong to the minimal assembly required for catalysis. Complex I functions in the transfer of electrons from NADH to the respiratory chain. The immediate electron acceptor for the enzyme is believed to be ubiquinone. The sequence is that of NADH-ubiquinone oxidoreductase chain 3 (ND3) from Acanthamoeba castellanii (Amoeba).